We begin with the raw amino-acid sequence, 160 residues long: Phosphopantetheine adenylyltransferase (160 aa).

Substrate is bound at residue Ser-9. ATP contacts are provided by residues 9–10 (SF) and His-17. Substrate-binding residues include Lys-41, Leu-73, and Lys-87. Residues 88-90 (GLR), Glu-98, and 123-129 (YGYLSSS) contribute to the ATP site.

Belongs to the bacterial CoaD family. Homohexamer. It depends on Mg(2+) as a cofactor.

It is found in the cytoplasm. The enzyme catalyses (R)-4'-phosphopantetheine + ATP + H(+) = 3'-dephospho-CoA + diphosphate. It participates in cofactor biosynthesis; coenzyme A biosynthesis; CoA from (R)-pantothenate: step 4/5. Functionally, reversibly transfers an adenylyl group from ATP to 4'-phosphopantetheine, yielding dephospho-CoA (dPCoA) and pyrophosphate. The polypeptide is Phosphopantetheine adenylyltransferase (Caldanaerobacter subterraneus subsp. tengcongensis (strain DSM 15242 / JCM 11007 / NBRC 100824 / MB4) (Thermoanaerobacter tengcongensis)).